Reading from the N-terminus, the 122-residue chain is MIQQESRLRVADNTGAREILCIRVLGGSTRRFAGIGDVIVATVKEATPGGNVKAGEVVKAVIVRAKKETRRPDGSYIKFDENAAVLIKNDNEPRGTRIFGPVARELRDKKFMKIVSLAPEVI.

It belongs to the universal ribosomal protein uL14 family. In terms of assembly, part of the 50S ribosomal subunit. Forms a cluster with proteins L3 and L19. In the 70S ribosome, L14 and L19 interact and together make contacts with the 16S rRNA in bridges B5 and B8.

In terms of biological role, binds to 23S rRNA. Forms part of two intersubunit bridges in the 70S ribosome. This Corynebacterium diphtheriae (strain ATCC 700971 / NCTC 13129 / Biotype gravis) protein is Large ribosomal subunit protein uL14.